The chain runs to 932 residues: Probable UDP-N-acetylglucosamine--peptide N-acetylglucosaminyltransferase SPINDLY (932 aa).

Residues methionine 1–aspartate 15 show a composition bias toward basic and acidic residues. Residues methionine 1–isoleucine 39 form a disordered region. 11 TPR repeats span residues glycine 48–serine 81, isoleucine 82–asparagine 115, alanine 116–tyrosine 149, alanine 157–tyrosine 190, alanine 191–tyrosine 224, alanine 225–phenylalanine 258, alanine 266–tyrosine 299, alanine 300–cysteine 333, alanine 334–phenylalanine 367, glutamine 369–tyrosine 401, and alanine 402–serine 435. A catalytic region region spans residues arginine 436–serine 932. The segment at valine 881 to phenylalanine 902 is disordered.

Belongs to the glycosyltransferase 41 family. O-GlcNAc transferase subfamily. In terms of tissue distribution, expressed in stems, leaves and flowers. Expressed during all stages of corolla maturation.

The protein localises to the nucleus. It carries out the reaction L-seryl-[protein] + UDP-N-acetyl-alpha-D-glucosamine = 3-O-(N-acetyl-beta-D-glucosaminyl)-L-seryl-[protein] + UDP + H(+). It catalyses the reaction L-threonyl-[protein] + UDP-N-acetyl-alpha-D-glucosamine = 3-O-(N-acetyl-beta-D-glucosaminyl)-L-threonyl-[protein] + UDP + H(+). Its pathway is protein modification; protein glycosylation. Functionally, probable O-linked N-acetylglucosamine transferase (OGT) involved in various processes such as gibberellin (GA) signaling pathway. OGTs catalyze the addition of nucleotide-activated sugars directly onto the polypeptide through O-glycosidic linkage with the hydroxyl of serine or threonine. Probably acts by adding O-linked sugars to yet unknown proteins. The chain is Probable UDP-N-acetylglucosamine--peptide N-acetylglucosaminyltransferase SPINDLY (SPY) from Petunia hybrida (Petunia).